We begin with the raw amino-acid sequence, 220 residues long: Deoxyribose-phosphate aldolase (220 aa).

The active-site Proton donor/acceptor is the D89. Residue K151 is the Schiff-base intermediate with acetaldehyde of the active site. The active-site Proton donor/acceptor is K180.

It belongs to the DeoC/FbaB aldolase family. DeoC type 1 subfamily.

It localises to the cytoplasm. It catalyses the reaction 2-deoxy-D-ribose 5-phosphate = D-glyceraldehyde 3-phosphate + acetaldehyde. It participates in carbohydrate degradation; 2-deoxy-D-ribose 1-phosphate degradation; D-glyceraldehyde 3-phosphate and acetaldehyde from 2-deoxy-alpha-D-ribose 1-phosphate: step 2/2. In terms of biological role, catalyzes a reversible aldol reaction between acetaldehyde and D-glyceraldehyde 3-phosphate to generate 2-deoxy-D-ribose 5-phosphate. This Streptococcus suis (strain 05ZYH33) protein is Deoxyribose-phosphate aldolase.